The following is a 379-amino-acid chain: MNQSLGVLRLTRGVIALALASVASGCSSTGADRTAATPAAANPAATEPVKWECPAGYEVKEGLNVDFPHKGMKRAFIVYPAKNVSGPAPVWVPMTGSVESTNDNLTVARSGANSILADHGYTVIAPVRACANQDPNIRGERCNGPGSNGWNWNPWFEGRAADPSGEHWKNDEGPDSSFFVAMVQCVGTKYKLDARRLFLGGISSGGTMTNRALLFRSNFWAGGLPISGEWYVTSDDGTPLSFDDARAAVAAAPTKIHQGRVGPYPLPAKVGPLIVMTVWGGEKDLWNCTRPDGSRFLCADYRPSTQAGSNFFSAQPDVVHVACSSTHGHMWPQLNTQEFNRWALDTLASHPKGSDPRSFKLTQPPEGYTCHVGPFTGLY.

The signal sequence occupies residues 1-23 (MNQSLGVLRLTRGVIALALASVA). Residues S203 and S309 each act as charge relay system in the active site.

Belongs to the peptidase S9A family. As to quaternary structure, monomer.

The enzyme catalyses nonane-4,6-dione + H2O = pentan-2-one + butanoate + H(+). Functionally, catalyzes the hydrolysis of 4,6-nonanedione, a beta-diketone compound. Also mediates hydrolysis of oxidized polyvinyl alcohol (PVA) in the second step in the degradation of polyvinyl alcohol. Not active toward the monoketone structure. The polypeptide is Oxidized polyvinyl alcohol hydrolase (pvaB) (Pseudomonas sp).